Consider the following 201-residue polypeptide: Probable GTP-binding protein EngB (201 aa).

Residues 21–191 (PEAQIALAGR…WQELARAAGV (171 aa)) enclose the EngB-type G domain. GTP contacts are provided by residues 29-36 (GRSNVGKS), 56-60 (GKTRS), 75-78 (DLPG), 142-145 (TKAD), and 168-172 (VLTSS). Residues Ser36 and Thr58 each contribute to the Mg(2+) site.

The protein belongs to the TRAFAC class TrmE-Era-EngA-EngB-Septin-like GTPase superfamily. EngB GTPase family. Mg(2+) serves as cofactor.

Functionally, necessary for normal cell division and for the maintenance of normal septation. This chain is Probable GTP-binding protein EngB, found in Desulfovibrio desulfuricans (strain ATCC 27774 / DSM 6949 / MB).